The following is a 205-amino-acid chain: Phosphoenolpyruvate guanylyltransferase (205 aa).

Residues Thr138, Gly154, and Ser157 each coordinate phosphoenolpyruvate.

Belongs to the CofC family.

The catalysed reaction is phosphoenolpyruvate + GTP + H(+) = enolpyruvoyl-2-diphospho-5'-guanosine + diphosphate. It participates in cofactor biosynthesis; coenzyme F420 biosynthesis. Functionally, guanylyltransferase that catalyzes the activation of phosphoenolpyruvate (PEP) as enolpyruvoyl-2-diphospho-5'-guanosine, via the condensation of PEP with GTP. It is involved in the biosynthesis of coenzyme F420, a hydride carrier cofactor. The polypeptide is Phosphoenolpyruvate guanylyltransferase (Chloroflexus aurantiacus (strain ATCC 29364 / DSM 637 / Y-400-fl)).